Here is a 157-residue protein sequence, read N- to C-terminus: Transcription elongation factor GreB (157 aa).

Residues 52–73 (KKLLREIDRRVRYLRKRLEDMR) are a coiled coil.

The protein belongs to the GreA/GreB family. GreB subfamily.

In terms of biological role, necessary for efficient RNA polymerase transcription elongation past template-encoded arresting sites. The arresting sites in DNA have the property of trapping a certain fraction of elongating RNA polymerases that pass through, resulting in locked ternary complexes. Cleavage of the nascent transcript by cleavage factors such as GreA or GreB allows the resumption of elongation from the new 3'terminus. GreB releases sequences of up to 9 nucleotides in length. The chain is Transcription elongation factor GreB from Pseudomonas syringae pv. tomato (strain ATCC BAA-871 / DC3000).